The following is a 467-amino-acid chain: MTFNDKNFMLKNQAAKQLYTAVQDQPIFDYHCHLDPKEIFEDKVFENIVDLWLGGDHYKWRLMRANGISEEEITGSASQLDKFKAFARTLQRSYGNPVYHWSAMELKNVFGIEEVLTEENAEEIYNRLNTYLLENKVSPRKLIADSKVTFIGTTDHPLDTLEWHQKLAEDKSFETIVAPTFRPDEAFIEHHNFKGFLDKLSQATGKEMTEFKDFISAMEDRIAYFAENGCKASDISFTEIVFEAAEESELNELLAKVKDGYKPNALEVKQWQTAVFAELCQLYKKYGFVTQVHFGALRNNHSKLYQKLGADVGIDSLGDQTALTSNMNKLLDNLVQKDALPKMIWYNLNPSYNIAVANTLANFQANEEGVKSYLQFGAGWWFADTKLGMISQMNALAEQGMLANFVGMLTDSRSFLSYQRHDYFRRILCTYLGEWIEEGEVPEDYEALGHMAKDIAYHNAVNYFKHE.

This sequence belongs to the metallo-dependent hydrolases superfamily. Uronate isomerase family.

The catalysed reaction is D-glucuronate = D-fructuronate. The enzyme catalyses aldehydo-D-galacturonate = keto-D-tagaturonate. It participates in carbohydrate metabolism; pentose and glucuronate interconversion. In Streptococcus uberis (strain ATCC BAA-854 / 0140J), this protein is Uronate isomerase.